The following is a 289-amino-acid chain: Acetyl-coenzyme A carboxylase carboxyl transferase subunit beta (289 aa).

The region spanning 30 to 289 (IWRECPRCHS…SNAWRANHDK (260 aa)) is the CoA carboxyltransferase N-terminal domain. Zn(2+) is bound by residues Cys34, Cys37, Cys52, and Cys55. Residues 34-55 (CPRCHSRFYYRRFGNFDVCPEC) form a C4-type zinc finger.

Belongs to the AccD/PCCB family. Acetyl-CoA carboxylase is a heterohexamer composed of biotin carboxyl carrier protein (AccB), biotin carboxylase (AccC) and two subunits each of ACCase subunit alpha (AccA) and ACCase subunit beta (AccD). Zn(2+) serves as cofactor.

It localises to the cytoplasm. The catalysed reaction is N(6)-carboxybiotinyl-L-lysyl-[protein] + acetyl-CoA = N(6)-biotinyl-L-lysyl-[protein] + malonyl-CoA. It functions in the pathway lipid metabolism; malonyl-CoA biosynthesis; malonyl-CoA from acetyl-CoA: step 1/1. Component of the acetyl coenzyme A carboxylase (ACC) complex. Biotin carboxylase (BC) catalyzes the carboxylation of biotin on its carrier protein (BCCP) and then the CO(2) group is transferred by the transcarboxylase to acetyl-CoA to form malonyl-CoA. The protein is Acetyl-coenzyme A carboxylase carboxyl transferase subunit beta of Oenococcus oeni (strain ATCC BAA-331 / PSU-1).